Consider the following 366-residue polypeptide: MALTAGIVGLPNVGKSTLFNAITQAGAESANYPFCTIDPNVGIVEVPDDRLQKLTELVNPKKTVPTAFEFTDIAGIVKGASKGEGLGNKFLSHIRQVDAICHVVRAFSDDNITHVSGKVDPIDDIETINLELILADMETVEKRITRVSKLAKQKDKDAVFEFEILSKLKEAFESEKPARSVEFTEEQQKLVKQLHLLTSKPILYVANVSEDEVADPSGNENVAKIREYAAGENAEVIVVCAKIESEIAELEGEEKQMFLEELGIQESGLDQLIKASYSLLGLATYFTAGEQEVRAWTFKKGMKAPECAGIIHSDFERGFIRAETVAYEDLLAGGGMAGAKEAGKVRLEGKEYVVQDGDVIHFRFNV.

An OBG-type G domain is found at 3–259 (LTAGIVGLPN…LEGEEKQMFL (257 aa)). Residue 12–17 (NVGKST) participates in ATP binding. Mg(2+)-binding residues include S16 and T36. Positions 281–364 (GLATYFTAGE…QDGDVIHFRF (84 aa)) constitute a TGS domain.

This sequence belongs to the TRAFAC class OBG-HflX-like GTPase superfamily. OBG GTPase family. YchF/OLA1 subfamily. Mg(2+) is required as a cofactor.

In terms of biological role, ATPase that binds to both the 70S ribosome and the 50S ribosomal subunit in a nucleotide-independent manner. This Bacillus subtilis (strain 168) protein is Ribosome-binding ATPase YchF.